Consider the following 200-residue polypeptide: 3-isopropylmalate dehydratase small subunit (200 aa).

Belongs to the LeuD family. LeuD type 1 subfamily. As to quaternary structure, heterodimer of LeuC and LeuD.

It catalyses the reaction (2R,3S)-3-isopropylmalate = (2S)-2-isopropylmalate. Its pathway is amino-acid biosynthesis; L-leucine biosynthesis; L-leucine from 3-methyl-2-oxobutanoate: step 2/4. Catalyzes the isomerization between 2-isopropylmalate and 3-isopropylmalate, via the formation of 2-isopropylmaleate. This chain is 3-isopropylmalate dehydratase small subunit, found in Actinobacillus pleuropneumoniae serotype 3 (strain JL03).